The primary structure comprises 365 residues: Phospho-N-acetylmuramoyl-pentapeptide-transferase (365 aa).

The next 9 membrane-spanning stretches (helical) occupy residues 47 to 67, 92 to 112, 114 to 134, 153 to 173, 180 to 200, 215 to 235, 239 to 259, 281 to 301, and 344 to 364; these read LLALGLGFSLAAIAGYWVVPL, PTMGGIFAIPAGLLPALILAG, SPLVWALAFVTLAYATIGWLD, LCLQFGAAFLFCLWLISQQGW, ITLPFGWSLALSLLFWPLAVF, LDGLAGGTGAAVLAGLGLWLA, PAIATFCCSLAGGFLGFLLHN, AIAIVANCLWVLLVMGGLFVL, and TQVVASFYGLTLLLIASCWLL.

This sequence belongs to the glycosyltransferase 4 family. MraY subfamily. Mg(2+) serves as cofactor.

The protein resides in the cell inner membrane. It carries out the reaction UDP-N-acetyl-alpha-D-muramoyl-L-alanyl-gamma-D-glutamyl-meso-2,6-diaminopimeloyl-D-alanyl-D-alanine + di-trans,octa-cis-undecaprenyl phosphate = di-trans,octa-cis-undecaprenyl diphospho-N-acetyl-alpha-D-muramoyl-L-alanyl-D-glutamyl-meso-2,6-diaminopimeloyl-D-alanyl-D-alanine + UMP. It participates in cell wall biogenesis; peptidoglycan biosynthesis. Its function is as follows. Catalyzes the initial step of the lipid cycle reactions in the biosynthesis of the cell wall peptidoglycan: transfers peptidoglycan precursor phospho-MurNAc-pentapeptide from UDP-MurNAc-pentapeptide onto the lipid carrier undecaprenyl phosphate, yielding undecaprenyl-pyrophosphoryl-MurNAc-pentapeptide, known as lipid I. In Synechococcus elongatus (strain ATCC 33912 / PCC 7942 / FACHB-805) (Anacystis nidulans R2), this protein is Phospho-N-acetylmuramoyl-pentapeptide-transferase.